Reading from the N-terminus, the 468-residue chain is Pituitary adenylate cyclase-activating polypeptide type I receptor (468 aa).

Positions 1–20 (MAGVVHVSLAALLLLPMAPA) are cleaved as a signal peptide. Topologically, residues 21-152 (MHSDCIFKKE…TGDQDYYYLS (132 aa)) are extracellular. Cystine bridges form between C34-C63, C54-C118, and C77-C134. Residues N48, N60, and N117 are each glycosylated (N-linked (GlcNAc...) asparagine). The interval 125-139 (EPFPHYFDACGFDEY) is important for ADCYAP1/PACAP ligand binding and specificity. Residues 153 to 177 (VKALYTVGYSTSLVTLTTAMVILCR) traverse the membrane as a helical segment. Over 178–187 (FRKLHCTRNF) the chain is Cytoplasmic. Residues 188–208 (IHMNLFVSFMLRAISVFIKDW) form a helical membrane-spanning segment. The Extracellular portion of the chain corresponds to 209–223 (ILYAEQDSNHCFIST). The helical transmembrane segment at 224-249 (VECKAVMVFFHYCVVSNYFWLFIEGL) threads the bilayer. C226 and C296 are disulfide-bonded. Residues 250-267 (YLFTLLVETFFPERRYFY) lie on the Cytoplasmic side of the membrane. The chain crosses the membrane as a helical span at residues 268 to 290 (WYTIIGWGTPTVCVTVWATLRLY). Over 291 to 302 (FDDTGCWDMNDS) the chain is Extracellular. An N-linked (GlcNAc...) asparagine glycan is attached at N300. Residues 303 to 329 (TALWWVIKGPVVGSIMVNFVLFIGIIV) form a helical membrane-spanning segment. The Cytoplasmic segment spans residues 330-347 (ILVQKLQSPDMGGNESSI). A helical membrane pass occupies residues 348–374 (YLRLARSTLLLIPLFGIHYTVFAFSPE). N375 is a glycosylation site (N-linked (GlcNAc...) asparagine). Residues 375–379 (NVSKR) lie on the Extracellular side of the membrane. The helical transmembrane segment at 380–403 (ERLVFELGLGSFQGFVVAVLYCFL) threads the bilayer. Over 404–468 (NGEVQAEIKR…SGLPADNLAT (65 aa)) the chain is Cytoplasmic. Residues S434 and S447 each carry the phosphoserine modification.

The protein belongs to the G-protein coupled receptor 2 family. In terms of assembly, interacts with maxadilan, a vasodilator peptide from Lutzomyia longipalpis saliva; the interaction results in ADCYAP1R1 activation. In terms of tissue distribution, most abundant in the brain, low expression in the lung, liver, thymus, spleen, pancreas and placenta.

It localises to the cell membrane. Its activity is regulated as follows. Several synthetic peptides derived from maxadilan, a vasodilator peptide from Lutzomyia longipalpis saliva, act as antagonists for ADCYAP1R1. G protein-coupled receptor activated by the neuropeptide pituitary adenylate cyclase-activating polypeptide (ADCYAP1/PACAP). Binds both PACAP27 and PACAP38 bioactive peptides. Ligand binding causes a conformation change that triggers signaling via guanine nucleotide-binding proteins (G proteins) and modulates the activity of downstream effectors. Activates cAMP-dependent pathway. May regulate the release of adrenocorticotropin, luteinizing hormone, growth hormone, prolactin, epinephrine, and catecholamine. May play a role in spermatogenesis and sperm motility. Causes smooth muscle relaxation and secretion in the gastrointestinal tract. The protein is Pituitary adenylate cyclase-activating polypeptide type I receptor of Homo sapiens (Human).